Here is a 367-residue protein sequence, read N- to C-terminus: Homoserine O-acetyltransferase (367 aa).

In terms of domain architecture, AB hydrolase-1 spans 41–339 (NLIVLEHALT…PVGHDAFLTE (299 aa)). Ser136 functions as the Nucleophile in the catalytic mechanism. Residue Arg205 coordinates substrate. Active-site residues include Asp303 and His333. Asp334 provides a ligand contact to substrate.

It belongs to the AB hydrolase superfamily. MetX family. Homodimer.

The protein localises to the cytoplasm. The enzyme catalyses L-homoserine + acetyl-CoA = O-acetyl-L-homoserine + CoA. Its pathway is amino-acid biosynthesis; L-methionine biosynthesis via de novo pathway; O-acetyl-L-homoserine from L-homoserine: step 1/1. In terms of biological role, transfers an acetyl group from acetyl-CoA to L-homoserine, forming acetyl-L-homoserine. The sequence is that of Homoserine O-acetyltransferase from Corynebacterium diphtheriae (strain ATCC 700971 / NCTC 13129 / Biotype gravis).